Reading from the N-terminus, the 377-residue chain is Required for respiratory growth protein 1, mitochondrial (377 aa).

It belongs to the RRG1 family.

Its subcellular location is the mitochondrion. Functionally, essential for respiratory growth and required for mitochondrial protein synthesis. Required for vacuolar acidification. The sequence is that of Required for respiratory growth protein 1, mitochondrial (RRG1) from Candida glabrata (strain ATCC 2001 / BCRC 20586 / JCM 3761 / NBRC 0622 / NRRL Y-65 / CBS 138) (Yeast).